Reading from the N-terminus, the 706-residue chain is Fatty acid oxidation complex subunit alpha (706 aa).

The interval 1-188 is enoyl-CoA hydratase; sequence MDKSFTLNRL…KMGLVDDVVP (188 aa). Positions 308 to 706 are 3-hydroxyacyl-CoA dehydrogenase; it reads KAVNKVMVLG…MAESGSKFYE (399 aa).

In the N-terminal section; belongs to the enoyl-CoA hydratase/isomerase family. The protein in the central section; belongs to the 3-hydroxyacyl-CoA dehydrogenase family. In terms of assembly, heterotetramer of two alpha chains (FadJ) and two beta chains (FadI).

Its subcellular location is the cytoplasm. The enzyme catalyses a (3S)-3-hydroxyacyl-CoA = a (2E)-enoyl-CoA + H2O. The catalysed reaction is a 4-saturated-(3S)-3-hydroxyacyl-CoA = a (3E)-enoyl-CoA + H2O. It catalyses the reaction a (3S)-3-hydroxyacyl-CoA + NAD(+) = a 3-oxoacyl-CoA + NADH + H(+). It carries out the reaction (3S)-3-hydroxybutanoyl-CoA = (3R)-3-hydroxybutanoyl-CoA. The protein operates within lipid metabolism; fatty acid beta-oxidation. Functionally, catalyzes the formation of a hydroxyacyl-CoA by addition of water on enoyl-CoA. Also exhibits 3-hydroxyacyl-CoA epimerase and 3-hydroxyacyl-CoA dehydrogenase activities. In Shewanella loihica (strain ATCC BAA-1088 / PV-4), this protein is Fatty acid oxidation complex subunit alpha.